The chain runs to 377 residues: Porphobilinogen deaminase (377 aa).

C269 carries the post-translational modification S-(dipyrrolylmethanemethyl)cysteine.

This sequence belongs to the HMBS family. As to quaternary structure, monomer. Requires dipyrromethane as cofactor.

The catalysed reaction is 4 porphobilinogen + H2O = hydroxymethylbilane + 4 NH4(+). Its pathway is porphyrin-containing compound metabolism; protoporphyrin-IX biosynthesis; coproporphyrinogen-III from 5-aminolevulinate: step 2/4. In terms of biological role, tetrapolymerization of the monopyrrole PBG into the hydroxymethylbilane pre-uroporphyrinogen in several discrete steps. This chain is Porphobilinogen deaminase, found in Micrococcus luteus (strain ATCC 4698 / DSM 20030 / JCM 1464 / CCM 169 / CCUG 5858 / IAM 1056 / NBRC 3333 / NCIMB 9278 / NCTC 2665 / VKM Ac-2230) (Micrococcus lysodeikticus).